A 172-amino-acid chain; its full sequence is Neudesin (172 aa).

Residues 1–31 form the signal peptide; sequence MVGPAPRRRLRPLAALALVLALAPGLPTARA. Positions 44–129 constitute a Cytochrome b5 heme-binding domain; sequence VRLFTEEELA…KELEALDEVF (86 aa). Lys136 carries the post-translational modification N6-acetyllysine. The segment at 151–172 is disordered; that stretch reads DGSPNLDFKPEDQPHFDIKDEF. Positions 158-172 are enriched in basic and acidic residues; sequence FKPEDQPHFDIKDEF.

The protein belongs to the cytochrome b5 family. MAPR subfamily. As to quaternary structure, interacts with PINK1 and PARK7. Ubiquitously expressed with high expression in heart. Over-expressed in various tumors including carcinomas of the uterine cervix, lymphoma, colon, lung, skin and leukemia, as well as carcinoma of the breast.

The protein localises to the secreted. The protein resides in the extracellular space. Its subcellular location is the mitochondrion. It localises to the endoplasmic reticulum. Acts as a neurotrophic factor in postnatal mature neurons enhancing neuronal survival. Promotes cell proliferation and neurogenesis in undifferentiated neural progenitor cells at the embryonic stage and inhibits differentiation of astrocytes. Its neurotrophic activity is exerted via MAPK1/ERK2, MAPK3/ERK1 and AKT1/AKT pathways. Neurotrophic activity is enhanced by binding to heme. Also acts as an anorexigenic neurotrophic factor that contributes to energy balance. This is Neudesin from Homo sapiens (Human).